The primary structure comprises 423 residues: GTPase ERA-like, chloroplastic (423 aa).

A chloroplast-targeting transit peptide spans 1 to 60 (MELGLALRLVAPPPRLPCRALQPPPMPCFSPCAARRSRIRSSRLERRVGVVVSGGSMASL). The Era-type G domain occupies 124–294 (RSGYVAVLGK…KEWILSKLPL (171 aa)). The G1 stretch occupies residues 132 to 139 (GKPNVGKS). Residue 132–139 (GKPNVGKS) participates in GTP binding. Residues 158 to 162 (QTTRH) form a G2 region. Residues 179 to 182 (DTPG) form a G3 region. GTP is bound by residues 179–183 (DTPGV) and 244–247 (NKKD). The segment at 244-247 (NKKD) is G4. Residues 273-275 (ISA) form a G5 region. One can recognise a KH type-2 domain in the interval 325 to 402 (YRQEIPYACQ…YLEIMVKVKE (78 aa)).

The protein belongs to the TRAFAC class TrmE-Era-EngA-EngB-Septin-like GTPase superfamily. Era GTPase family.

The protein localises to the plastid. It is found in the chloroplast stroma. The protein resides in the chloroplast nucleoid. In terms of biological role, nuclear genome-encoded probable GTPase involved in ribosome biogenesis in chloroplasts. Plays a role in 16S rRNA maturation in plastids and may contribute to the assembly of the small (30S) ribosomal subunit. The polypeptide is GTPase ERA-like, chloroplastic (Oryza sativa subsp. japonica (Rice)).